Here is a 76-residue protein sequence, read N- to C-terminus: Acyl carrier protein (76 aa).

Residues 1–76 (MSIEERVKKI…SAIDYVQNNQ (76 aa)) enclose the Carrier domain. O-(pantetheine 4'-phosphoryl)serine is present on Ser36.

Belongs to the acyl carrier protein (ACP) family. In terms of processing, 4'-phosphopantetheine is transferred from CoA to a specific serine of apo-ACP by AcpS. This modification is essential for activity because fatty acids are bound in thioester linkage to the sulfhydryl of the prosthetic group.

It localises to the cytoplasm. It functions in the pathway lipid metabolism; fatty acid biosynthesis. Functionally, carrier of the growing fatty acid chain in fatty acid biosynthesis. The polypeptide is Acyl carrier protein (Histophilus somni (strain 129Pt) (Haemophilus somnus)).